We begin with the raw amino-acid sequence, 54 residues long: uncharacterized protein (54 aa).

This is an uncharacterized protein from Bacillus subtilis (strain 168).